The chain runs to 991 residues: UvrABC system protein A (991 aa).

48-55 is an ATP binding site; it reads GLSGSGKS. 2 ABC transporter domains span residues 345-624 and 644-972; these read WAKS…PKSL and NHRR…KFLE. 676–683 provides a ligand contact to ATP; the sequence is GVSGGGKS. The C4-type zinc-finger motif lies at 775–801; it reads CEACQGDGVIKIEMHFLPDVYVTCDVC.

It belongs to the ABC transporter superfamily. UvrA family. As to quaternary structure, forms a heterotetramer with UvrB during the search for lesions.

The protein resides in the cytoplasm. The UvrABC repair system catalyzes the recognition and processing of DNA lesions. UvrA is an ATPase and a DNA-binding protein. A damage recognition complex composed of 2 UvrA and 2 UvrB subunits scans DNA for abnormalities. When the presence of a lesion has been verified by UvrB, the UvrA molecules dissociate. This is UvrABC system protein A from Bradyrhizobium diazoefficiens (strain JCM 10833 / BCRC 13528 / IAM 13628 / NBRC 14792 / USDA 110).